A 156-amino-acid chain; its full sequence is Ribosome maturation factor RimP (156 aa).

This sequence belongs to the RimP family.

The protein resides in the cytoplasm. Functionally, required for maturation of 30S ribosomal subunits. The protein is Ribosome maturation factor RimP of Bacillus cytotoxicus (strain DSM 22905 / CIP 110041 / 391-98 / NVH 391-98).